Reading from the N-terminus, the 165-residue chain is Regulator of ribonuclease activity A (165 aa).

Belongs to the RraA family. In terms of assembly, homotrimer. Binds to both RNA-binding sites in the C-terminal region of Rne and to RhlB.

It is found in the cytoplasm. Globally modulates RNA abundance by binding to RNase E (Rne) and regulating its endonucleolytic activity. Can modulate Rne action in a substrate-dependent manner by altering the composition of the degradosome. Modulates RNA-binding and helicase activities of the degradosome. The sequence is that of Regulator of ribonuclease activity A from Haemophilus ducreyi (strain 35000HP / ATCC 700724).